Consider the following 103-residue polypeptide: RNA-binding protein Hfq (103 aa).

The 60-residue stretch at 9 to 68 folds into the Sm domain; it reads DPFLNALRRERVPVSIYLVNGIKLQGQIESFDQFVILLKNTVSQMVYKHAISTVVPSRPV. The disordered stretch occupies residues 63–103; that stretch reads VPSRPVSHHSNNAGGGTGSNFHHGSNAQGSSAPAQDSDETE. Polar residues predominate over residues 81–96; the sequence is SNFHHGSNAQGSSAPA.

Belongs to the Hfq family. Homohexamer.

RNA chaperone that binds small regulatory RNA (sRNAs) and mRNAs to facilitate mRNA translational regulation in response to envelope stress, environmental stress and changes in metabolite concentrations. Also binds with high specificity to tRNAs. This Enterobacter sp. (strain 638) protein is RNA-binding protein Hfq.